A 413-amino-acid polypeptide reads, in one-letter code: DNA primase large subunit PriL (413 aa).

4 residues coordinate [4Fe-4S] cluster: Cys-230, Cys-301, Cys-310, and Cys-317. Basic and acidic residues-rich tracts occupy residues 340 to 356, 362 to 381, and 388 to 413; these read MEKE…QEEK, KEKQ…EEKG, and KKRE…KKRI. The segment at 340-413 is disordered; the sequence is MEKEKEEKEE…KEKQEEKKRI (74 aa).

The protein belongs to the eukaryotic-type primase large subunit family. In terms of assembly, heterodimer of a small subunit (PriS) and a large subunit (PriL). Requires [4Fe-4S] cluster as cofactor.

Regulatory subunit of DNA primase, an RNA polymerase that catalyzes the synthesis of short RNA molecules used as primers for DNA polymerase during DNA replication. Stabilizes and modulates the activity of the small subunit, increasing the rate of DNA synthesis, and conferring RNA synthesis capability. The DNA polymerase activity may enable DNA primase to also catalyze primer extension after primer synthesis. May also play a role in DNA repair. The sequence is that of DNA primase large subunit PriL from Methanosarcina barkeri (strain Fusaro / DSM 804).